We begin with the raw amino-acid sequence, 1402 residues long: MNQEVMNLFNPQVPAQNFDSIRISIASPEKILSWSYGEIKKPETINYRTFKPERDGLFCARIFGPIKDYECLCGKYKRMKYKGIICEKCGVEVTLSRVRRERMGHIELAAPVAHIWFLKSLPSRISTLLDMTLKDVERVLYFENYIVTEPGLTALKEHQLLSEEEYMLAVDEYGEDQFTAMIGAEAIYEMLASMNLEKIAGDLRAELADTTSDLKQKKLMKRLKIVENFMESGNRPEWMIMKVVPVIPPDLRPLVPLDGGRFATSDLNDLYRRVINRNNRLKRLIELRAPGIIIRNEKRMLQESVDALFDNGRRGRVITGANKRPLKSLSDMLKGKQGRFRQNLLGKRVDYSGRSVIVTGPELKLHQCGLPKKMALELFKPFIYARLDAKGYSSTVKQAKKLVEKEKPEVWDILDEVIREHPVLLNRAPTLHRLGIQAFEPILVEGKAIQLHPLVCTAFNADFDGDQMAVHVPLSLEAQLEARVLMMSTNNILHPANGAPIIVPSQDMVLGLYYLSILNQNEPGEGMAFSDLGELHHALESKVVTLHTKIRGRFKSVDEDGKPYSKIYETTPGRLLIGELLPKNGKVPFDICNQEMTKKNISKMIDTVYRHCGQKDTVIFCDRIMQLGFAHACRAGISFGKDDMVIPDAKAKIVADTENLVKEYEQQYNDGLITQGEKYNKVVDAWGKATEKVAEEMMARIKAVEFDEKTGRQKPMNSIYMMSHSGARGSPNQMRQLGGMRGLMAKPSGEIIETPIISNFKEGLTVNEYFNSTHGARKGLADTALKTANSGYLTRRLVDVAQDCIVTHVDCGTQTGLTMTAIVDAGQVVASIGARILGRTALDDIDHPVTGERIVDAGKMILEPDVVEIEKAGIQSIRIRSALTCEIQTGVCSVCYGRDLARGTPVNMGEAVGVIAAQSIGEPGTQLTMRTFHLGGTATVVDQSFLEASYEGTVQIKNRNILRNSDGNLVAMGRNMTVQILDERGVERSSQRVAYGSKLHVDEGDKVKRGQRLAEWDPYTRPMMTEVAGTVQFEDLVDGLSVLEATDESTGITKRQVIDWRSTPRGSDLKPAIVIKDASGNIAKLSRGGDARFFLSVDAILSVEPGTKVSQGDVLARSPLESAKTKDITGGLPRVAELFEARRPKDHAIIAEIDGTIRLGRDYKNKRRVIIEPAEDGVEPVEYLIPKGKPFHLQEGDYIEKGDYILDGNPAPHDILAIKGVEALASYLVNEIQEVYRLQGVVINDKHIEVIVRQMLQKVEITDAGDSTYIVGDNVDRIELEDVNDHLIEQGKKPAYGDPVLLGITKASLQTPSFISAASFQETTKVLTEAAIAGKTDGLQGLKENVIVGRLIPAGTGGTMTQIRRIATSRDEMILEERRKGTGAAVATPMLQDMAEKAPAAE.

Positions 71, 73, 86, and 89 each coordinate Zn(2+). Residues Asp-462, Asp-464, and Asp-466 each coordinate Mg(2+). Residues Cys-811, Cys-885, Cys-892, and Cys-895 each coordinate Zn(2+).

Belongs to the RNA polymerase beta' chain family. The RNAP catalytic core consists of 2 alpha, 1 beta, 1 beta' and 1 omega subunit. When a sigma factor is associated with the core the holoenzyme is formed, which can initiate transcription. The cofactor is Mg(2+). Zn(2+) serves as cofactor.

It catalyses the reaction RNA(n) + a ribonucleoside 5'-triphosphate = RNA(n+1) + diphosphate. Functionally, DNA-dependent RNA polymerase catalyzes the transcription of DNA into RNA using the four ribonucleoside triphosphates as substrates. The chain is DNA-directed RNA polymerase subunit beta' from Rhizobium johnstonii (strain DSM 114642 / LMG 32736 / 3841) (Rhizobium leguminosarum bv. viciae).